The chain runs to 308 residues: Elongation factor Ts (308 aa).

Residues 80–83 form an involved in Mg(2+) ion dislocation from EF-Tu region; sequence TDFV.

Belongs to the EF-Ts family.

The protein resides in the cytoplasm. Associates with the EF-Tu.GDP complex and induces the exchange of GDP to GTP. It remains bound to the aminoacyl-tRNA.EF-Tu.GTP complex up to the GTP hydrolysis stage on the ribosome. The polypeptide is Elongation factor Ts (Rhizobium leguminosarum bv. trifolii (strain WSM2304)).